The sequence spans 143 residues: 3-hydroxyacyl-[acyl-carrier-protein] dehydratase FabZ (143 aa).

Residue His-47 is part of the active site.

Belongs to the thioester dehydratase family. FabZ subfamily.

The protein localises to the cytoplasm. It catalyses the reaction a (3R)-hydroxyacyl-[ACP] = a (2E)-enoyl-[ACP] + H2O. Its function is as follows. Involved in unsaturated fatty acids biosynthesis. Catalyzes the dehydration of short chain beta-hydroxyacyl-ACPs and long chain saturated and unsaturated beta-hydroxyacyl-ACPs. This chain is 3-hydroxyacyl-[acyl-carrier-protein] dehydratase FabZ, found in Moorella thermoacetica (strain ATCC 39073 / JCM 9320).